Reading from the N-terminus, the 503-residue chain is LEM domain-containing protein 2 (503 aa).

A2 carries the post-translational modification N-acetylalanine. Residues 2-42 enclose the LEM domain; it reads AGLSDLELRRELQALGFQPGPITDTTRDVYRNKLRRLRGEA. Residues 42–74 are compositionally biased toward basic and acidic residues; the sequence is ARLRDEERLREEARPRGEERLREEARLREDAPL. Disordered regions lie at residues 42-97 and 127-157; these read ARLR…SGSA and AQLR…GPGL. Residues 74-130 form a required for nuclear retention and interaction with LMNA isoform C region; the sequence is LRARPAAASPRAEPWLSQPASGSAYATPGAYGDIRPSAASWVGSRGLAYPARPAQLR. The span at 75–87 shows a compositional bias: low complexity; that stretch reads RARPAAASPRAEP. S166 and S175 each carry phosphoserine. The tract at residues 172–198 is disordered; the sequence is LPSSLLGPDPRPGLRATRAGPAGAARA. Low complexity predominate over residues 184-197; sequence GLRATRAGPAGAAR. The next 2 helical transmembrane spans lie at 213–233 and 377–397; these read LLLW…WVKM and VTNV…LILL. Residues 395-503 are winged-Helix (WH); that stretch reads ILLKYRWRKL…KPSSFSDSER (109 aa). S497, S499, and S501 each carry phosphoserine.

In terms of assembly, interacts (via N-terminus) with LMNA isoform C (via C-terminus) (in vitro). Interacts (via LEM domain) with BANF1. Interacts (via C-terminus) with CHMP7. Interacts (via N-terminus) with tubulin; the interaction causes microtubule bundling and stabilization (in vitro). In terms of processing, phosphorylated; strongly phosphorylated in mitosis compared to G1/S. As to expression, ubiquitously expressed, including bone marrow, brain, kidney, colon, skeletal muscle, thymus, testis and uterus.

The protein localises to the nucleus inner membrane. The protein resides in the nucleus envelope. It localises to the cytoplasm. It is found in the cytoskeleton. Its subcellular location is the spindle. Its function is as follows. Nuclear lamina-associated inner nuclear membrane protein that is involved in nuclear structure organization, maintenance of nuclear envelope (NE) integrity and NE reformation after mitosis. Plays a role as transmembrane adapter for the endosomal sorting complexes required for transport (ESCRT), and is thereby involved in ESCRT-mediated NE reformation. Promotes ESCRT-mediated NE closure by recruiting CHMP7 and downstream ESCRT-III proteins IST1/CHMP8 and CHMP2A to the reforming NE during anaphase. During nuclear reassembly, condenses into a liquid-like coating around microtubule spindles and coassembles with CHMP7 to form a macromolecular O-ring seal at the confluence between membranes, chromatin, and the spindle to facilitate early nuclear sealing. Plays a role in the organization of heterochromatin associated with the NE and in the maintenance of NE organization under mechanical stress. Required for embryonic development and involved in regulation of several signaling pathways such as MAPK and AKT. Required for myoblast differentiation involving regulation of ERK signaling. Essential for cardiac homeostasis and proper heart function. The protein is LEM domain-containing protein 2 (LEMD2) of Homo sapiens (Human).